The primary structure comprises 660 residues: Sodium/nucleoside cotransporter 2 (660 aa).

Ser46 bears the Phosphoserine mark. The next 14 helical transmembrane spans lie at 82 to 102 (ILLG…CILN), 106 to 125 (ALAL…CHFL), 150 to 168 (KRVF…LALD), 174 to 194 (EQLI…ACSK), 202 to 222 (RTVF…IRTE), 235 to 255 (IQIF…DTLV), 262 to 282 (QSLP…YLGL), 297 to 316 (TMGT…FVGM), 338 to 357 (VMTG…FISF), 364 to 383 (LISA…KLVY), 425 to 445 (VAAN…TLSW), 456 to 476 (SFQV…GVQW), 531 to 551 (TTFS…LGGL), and 569 to 589 (ALFT…ILYV).

This sequence belongs to the concentrative nucleoside transporter (CNT) (TC 2.A.41) family.

Its subcellular location is the membrane. It is found in the apicolateral cell membrane. The enzyme catalyses adenosine(out) + Na(+)(out) = adenosine(in) + Na(+)(in). It catalyses the reaction inosine(out) + Na(+)(out) = inosine(in) + Na(+)(in). It carries out the reaction guanosine(out) + Na(+)(out) = guanosine(in) + Na(+)(in). The catalysed reaction is uridine(out) + Na(+)(out) = uridine(in) + Na(+)(in). Sodium-dependent and purine-selective transporter. Exhibits the transport characteristics of the nucleoside transport system cif or N1 subtype (N1/cif) (selective for purine nucleosides and uridine). Plays a critical role in specific uptake and salvage of purine nucleosides in kidney and other tissues. May contribute to regulate the transport of organic compounds in testes across the blood-testis-barrier. This Mus musculus (Mouse) protein is Sodium/nucleoside cotransporter 2 (Slc28a2).